The following is a 32-amino-acid chain: Cytochrome b6-f complex subunit 7 (32 aa).

The chain crosses the membrane as a helical span at residues 9–27 (AAVFWILIPIGLVGGALLL).

It belongs to the PetM family. The 4 large subunits of the cytochrome b6-f complex are cytochrome b6, subunit IV (17 kDa polypeptide, PetD), cytochrome f and the Rieske protein, while the 4 small subunits are PetG, PetL, PetM and PetN. The complex functions as a dimer.

The protein localises to the cellular thylakoid membrane. Component of the cytochrome b6-f complex, which mediates electron transfer between photosystem II (PSII) and photosystem I (PSI), cyclic electron flow around PSI, and state transitions. The polypeptide is Cytochrome b6-f complex subunit 7 (Prochlorococcus marinus (strain MIT 9301)).